The primary structure comprises 839 residues: Protein translocase subunit SecA (839 aa).

Residues Gln-85, 103-107 (GEGKT), and Asp-493 contribute to the ATP site. Residues 780–790 (QIHEQERERAS) are compositionally biased toward basic and acidic residues. The segment at 780 to 839 (QIHEQERERASQRATTAAPQNIQSQQSANTDDLPKVERNEACPCGSGKKFKNCHGRKSFS) is disordered. The span at 791 to 809 (QRATTAAPQNIQSQQSANT) shows a compositional bias: polar residues. Residues Cys-821, Cys-823, Cys-832, and His-833 each contribute to the Zn(2+) site. Residues 827–839 (KKFKNCHGRKSFS) show a composition bias toward basic residues.

This sequence belongs to the SecA family. As to quaternary structure, monomer and homodimer. Part of the essential Sec protein translocation apparatus which comprises SecA, SecYEG and auxiliary proteins SecDF. Other proteins may also be involved. Zn(2+) is required as a cofactor.

It localises to the cell membrane. The protein localises to the cytoplasm. The enzyme catalyses ATP + H2O + cellular proteinSide 1 = ADP + phosphate + cellular proteinSide 2.. Functionally, part of the Sec protein translocase complex. Interacts with the SecYEG preprotein conducting channel. Has a central role in coupling the hydrolysis of ATP to the transfer of proteins into and across the cell membrane, serving as an ATP-driven molecular motor driving the stepwise translocation of polypeptide chains across the membrane. The sequence is that of Protein translocase subunit SecA from Streptococcus pyogenes serotype M28 (strain MGAS6180).